A 443-amino-acid chain; its full sequence is Carboxypeptidase M (443 aa).

Positions M1–A17 are cleaved as a signal peptide. Positions N21–V311 constitute a Peptidase M14 domain. A glycan (N-linked (GlcNAc...) asparagine) is linked at N38. The Zn(2+) site is built by H83 and E86. Residues N115 and N164 are each glycosylated (N-linked (GlcNAc...) asparagine). Disulfide bonds link C138–C285, C242–C284, and C341–C410. Zn(2+) is bound at residue H190. The Proton donor/acceptor role is filled by E281. Residues N363 and N384 are each glycosylated (N-linked (GlcNAc...) asparagine). A lipid anchor (GPI-anchor amidated serine) is attached at S423. The propeptide at A424–K443 is removed in mature form.

It belongs to the peptidase M14 family. Zn(2+) serves as cofactor.

It is found in the cell membrane. The catalysed reaction is Cleavage of C-terminal arginine or lysine residues from polypeptides.. Its activity is regulated as follows. Inhibited by O-phenanthroline and MGTA and activated by cobalt. Its function is as follows. Specifically removes C-terminal basic residues (Arg or Lys) from peptides and proteins. It is believed to play important roles in the control of peptide hormone and growth factor activity at the cell surface, and in the membrane-localized degradation of extracellular proteins. This chain is Carboxypeptidase M (CPM), found in Homo sapiens (Human).